We begin with the raw amino-acid sequence, 136 residues long: Secreted RxLR effector protein 63 (136 aa).

The first 21 residues, M1–R21, serve as a signal peptide directing secretion. A RxLR motif is present at residues R43 to R46.

The protein belongs to the RxLR effector family.

The protein resides in the secreted. Its subcellular location is the host nucleus. Functionally, effector that partially suppresses the tobacco programmed cell death induced by cell death-inducing proteins. This chain is Secreted RxLR effector protein 63, found in Plasmopara viticola (Downy mildew of grapevine).